The following is a 466-amino-acid chain: Asparagine--tRNA ligase (466 aa).

Belongs to the class-II aminoacyl-tRNA synthetase family. As to quaternary structure, homodimer.

Its subcellular location is the cytoplasm. It carries out the reaction tRNA(Asn) + L-asparagine + ATP = L-asparaginyl-tRNA(Asn) + AMP + diphosphate + H(+). The polypeptide is Asparagine--tRNA ligase (Shewanella baltica (strain OS155 / ATCC BAA-1091)).